Here is a 446-residue protein sequence, read N- to C-terminus: MEKYLSVTTLTKYLKMKFDKDPYLERVYLTGQVSNFRKRPTHQYFSLKDDHAVIQATIWSGIYQKLGFDLEEGMKINVIGRVQVYEPSGSYSIIIEKAEPDGVGALAIQFEQLKKKLTEEGLFQERFKQALPQFSKRIGVVTSRSGAVIRDIITTVSRRFPGVDILLYPTKVQGEGAAEEIARNIARANQRDDLDLLIIGRGGGSIEDLWAFNEEIVVRAIFESRLPVISSVGHETDVTLADFVADRRAATPTAAAELATPVTKLDVLTHLQNQEKRMATAVRNVLSKKQEALKKCSQSVIFRQPERLYDGYLQRLDQLQLRLKQSLRTRISDNKQLVQARTHQLVQLSPVTKIQRYQDRLGQLDKLLDSQMALVYDAKVAEAKRLSEALLMLDTSRIVARGYAIVKKEESVVDSVESLKKKDQVTLLMRDGQVELEVKDVKTKEI.

Belongs to the XseA family. In terms of assembly, heterooligomer composed of large and small subunits.

Its subcellular location is the cytoplasm. The catalysed reaction is Exonucleolytic cleavage in either 5'- to 3'- or 3'- to 5'-direction to yield nucleoside 5'-phosphates.. In terms of biological role, bidirectionally degrades single-stranded DNA into large acid-insoluble oligonucleotides, which are then degraded further into small acid-soluble oligonucleotides. This chain is Exodeoxyribonuclease 7 large subunit, found in Streptococcus pneumoniae (strain Hungary19A-6).